Reading from the N-terminus, the 327-residue chain is Methionyl-tRNA formyltransferase (327 aa).

Residue 122-125 coordinates (6S)-5,6,7,8-tetrahydrofolate; that stretch reads SLLP.

It belongs to the Fmt family.

It catalyses the reaction L-methionyl-tRNA(fMet) + (6R)-10-formyltetrahydrofolate = N-formyl-L-methionyl-tRNA(fMet) + (6S)-5,6,7,8-tetrahydrofolate + H(+). In terms of biological role, attaches a formyl group to the free amino group of methionyl-tRNA(fMet). The formyl group appears to play a dual role in the initiator identity of N-formylmethionyl-tRNA by promoting its recognition by IF2 and preventing the misappropriation of this tRNA by the elongation apparatus. The sequence is that of Methionyl-tRNA formyltransferase from Ralstonia pickettii (strain 12J).